Consider the following 102-residue polypeptide: Large ribosomal subunit protein bL21 (102 aa).

Belongs to the bacterial ribosomal protein bL21 family. As to quaternary structure, part of the 50S ribosomal subunit. Contacts protein L20.

Functionally, this protein binds to 23S rRNA in the presence of protein L20. In Sulfurimonas denitrificans (strain ATCC 33889 / DSM 1251) (Thiomicrospira denitrificans (strain ATCC 33889 / DSM 1251)), this protein is Large ribosomal subunit protein bL21.